Here is a 672-residue protein sequence, read N- to C-terminus: Transketolase (672 aa).

H35 lines the substrate pocket. Thiamine diphosphate is bound by residues H75 and 124–126 (GPL). D162 provides a ligand contact to Mg(2+). Positions 163 and 192 each coordinate thiamine diphosphate. 2 residues coordinate Mg(2+): N192 and I194. Residues H266, R361, and S388 each coordinate substrate. H266 is a thiamine diphosphate binding site. The active-site Proton donor is E415. F441 is a thiamine diphosphate binding site. Substrate contacts are provided by H465, D473, and R524.

The protein belongs to the transketolase family. Homodimer. Requires Mg(2+) as cofactor. The cofactor is Ca(2+). Mn(2+) serves as cofactor. It depends on Co(2+) as a cofactor. Thiamine diphosphate is required as a cofactor.

The catalysed reaction is D-sedoheptulose 7-phosphate + D-glyceraldehyde 3-phosphate = aldehydo-D-ribose 5-phosphate + D-xylulose 5-phosphate. The protein operates within carbohydrate biosynthesis; Calvin cycle. It functions in the pathway carbohydrate degradation; pentose phosphate pathway. In terms of biological role, catalyzes the transfer of a two-carbon ketol group from a ketose donor to an aldose acceptor, via a covalent intermediate with the cofactor thiamine pyrophosphate. This chain is Transketolase (tktA), found in Rhodobacter capsulatus (strain ATCC BAA-309 / NBRC 16581 / SB1003).